An 85-amino-acid chain; its full sequence is DNA-directed RNA polymerase subunit omega (85 aa).

Belongs to the RNA polymerase subunit omega family. The RNAP catalytic core consists of 2 alpha, 1 beta, 1 beta' and 1 omega subunit. When a sigma factor is associated with the core the holoenzyme is formed, which can initiate transcription.

It catalyses the reaction RNA(n) + a ribonucleoside 5'-triphosphate = RNA(n+1) + diphosphate. Promotes RNA polymerase assembly. Latches the N- and C-terminal regions of the beta' subunit thereby facilitating its interaction with the beta and alpha subunits. In Latilactobacillus sakei subsp. sakei (strain 23K) (Lactobacillus sakei subsp. sakei), this protein is DNA-directed RNA polymerase subunit omega.